A 504-amino-acid chain; its full sequence is Catalase (504 aa).

A disordered region spans residues 1 to 25; the sequence is MSKQDGKLTGLFGAPVSDRENSMTA. Active-site residues include H56 and N129. A heme-binding site is contributed by Y339.

This sequence belongs to the catalase family. Homodimer. Heme serves as cofactor.

It carries out the reaction 2 H2O2 = O2 + 2 H2O. In terms of biological role, decomposes hydrogen peroxide into water and oxygen; serves to protect cells from the toxic effects of hydrogen peroxide. The protein is Catalase (katA) of Staphylococcus epidermidis (strain ATCC 35984 / DSM 28319 / BCRC 17069 / CCUG 31568 / BM 3577 / RP62A).